Here is a 238-residue protein sequence, read N- to C-terminus: MTTPAYKRVLLKLSGEALMGDDPYGINRATIERMVADVSEVAKLGVELAIVIGGGNIFRGVAPGAQGMDRATADYMGMLATVMNSLALADAMRQVGITARVMSAIAIEQVVEPYVRPKALQYLEEGKIVIFAAGTGNPFFTTDTAAALRGSEIGAEIVLKATKVDGVYSADPNKDPDATRYATITFDEAISKHLQVMDATAFALCRDQKLPIKVFSIVKPGALKRVVMGEDEGTLVHV.

Lys12–Gly15 is an ATP binding site. Gly54 lines the UMP pocket. Residues Gly55 and Arg59 each contribute to the ATP site. UMP is bound by residues Asp74 and Thr135–Thr142. Residues Thr162, Tyr168, and Asp171 each contribute to the ATP site.

The protein belongs to the UMP kinase family. Homohexamer.

It localises to the cytoplasm. The enzyme catalyses UMP + ATP = UDP + ADP. Its pathway is pyrimidine metabolism; CTP biosynthesis via de novo pathway; UDP from UMP (UMPK route): step 1/1. With respect to regulation, inhibited by UTP. In terms of biological role, catalyzes the reversible phosphorylation of UMP to UDP. The polypeptide is Uridylate kinase (Janthinobacterium sp. (strain Marseille) (Minibacterium massiliensis)).